Reading from the N-terminus, the 176-residue chain is Small ribosomal subunit protein uS8c (176 aa).

It belongs to the universal ribosomal protein uS8 family. Part of the 30S ribosomal subunit.

The protein resides in the plastid. It localises to the chloroplast. One of the primary rRNA binding proteins, it binds directly to 16S rRNA central domain where it helps coordinate assembly of the platform of the 30S subunit. This chain is Small ribosomal subunit protein uS8c (rps8), found in Stigeoclonium helveticum (Green alga).